A 624-amino-acid polypeptide reads, in one-letter code: Anti-CBASS protein Acb1 (624 aa).

Position 106 (Tyr-106) interacts with 3',3'-cGAMP. Tyr-106 contacts 3',3'-cUAMP. Active-site residues include His-503, Thr-505, His-581, and Thr-583. Trp-617 is a 3',3'-cGAMP binding site. Trp-617 is a binding site for 3',3'-cUAMP.

It belongs to the anti-CBASS protein Acb1 family.

The catalysed reaction is 3',3'-cUAMP + H2O = U[3'-5']pAp[3'] + H(+). It carries out the reaction 3',3',3'-c-tri-AMP + H2O = A[3'-5']pA[3'-5']pAp[3'] + H(+). It catalyses the reaction 3',3',3'-cAAG + H2O = G[3'-5']pA[3'-5']pAp[3'] + H(+). The enzyme catalyses 3',3',3'-cAAG + H2O = A[3'-5']pG[3'-5']pAp[3'] + H(+). The catalysed reaction is 3',3'-cGAMP + H2O = G[3'-5']pAp[3'] + H(+). Counteracts or regulates the endogenous CBASS antiviral defense system. Phosphodiesterase that enables metal-independent hydrolysis of the host cyclic di- and trinucleotide CBASS signals such as 3'3'-cGAMP, 3'3'cUA, and 3'3'3'-cAAA. The polypeptide is Anti-CBASS protein Acb1 (Sphingomonas paeninsulae).